A 489-amino-acid polypeptide reads, in one-letter code: 6-phosphogluconate dehydrogenase, decarboxylating 1 (489 aa).

NADP(+) is bound by residues 9 to 14 and 32 to 34; these read GLAVMG and NRT. Position 50 is a phosphoserine (Ser-50). NADP(+) contacts are provided by residues 74–76 and Asn-102; that span reads VKA. Substrate contacts are provided by residues Asn-102 and 128–130; that span reads SGG. Residue Lys-182 is the Proton acceptor of the active site. 185 to 186 is a substrate binding site; that stretch reads HN. The active-site Proton donor is the Glu-189. Residues Tyr-190, Lys-259, Arg-286, Arg-446, and His-452 each contribute to the substrate site.

It belongs to the 6-phosphogluconate dehydrogenase family. Homodimer.

Its subcellular location is the cytoplasm. It catalyses the reaction 6-phospho-D-gluconate + NADP(+) = D-ribulose 5-phosphate + CO2 + NADPH. The protein operates within carbohydrate degradation; pentose phosphate pathway; D-ribulose 5-phosphate from D-glucose 6-phosphate (oxidative stage): step 3/3. In terms of biological role, catalyzes the oxidative decarboxylation of 6-phosphogluconate to ribulose 5-phosphate and CO(2), with concomitant reduction of NADP to NADPH. This Saccharomyces cerevisiae (strain ATCC 204508 / S288c) (Baker's yeast) protein is 6-phosphogluconate dehydrogenase, decarboxylating 1 (GND1).